A 445-amino-acid chain; its full sequence is Exodeoxyribonuclease 7 large subunit (445 aa).

It belongs to the XseA family. Heterooligomer composed of large and small subunits.

It is found in the cytoplasm. It carries out the reaction Exonucleolytic cleavage in either 5'- to 3'- or 3'- to 5'-direction to yield nucleoside 5'-phosphates.. Functionally, bidirectionally degrades single-stranded DNA into large acid-insoluble oligonucleotides, which are then degraded further into small acid-soluble oligonucleotides. This Geotalea daltonii (strain DSM 22248 / JCM 15807 / FRC-32) (Geobacter daltonii) protein is Exodeoxyribonuclease 7 large subunit.